We begin with the raw amino-acid sequence, 242 residues long: Pyridoxine 5'-phosphate synthase (242 aa).

3-amino-2-oxopropyl phosphate is bound at residue N6. 8–9 is a 1-deoxy-D-xylulose 5-phosphate binding site; it reads DH. R17 lines the 3-amino-2-oxopropyl phosphate pocket. The active-site Proton acceptor is H42. Positions 44 and 49 each coordinate 1-deoxy-D-xylulose 5-phosphate. The Proton acceptor role is filled by E69. T99 is a binding site for 1-deoxy-D-xylulose 5-phosphate. H190 serves as the catalytic Proton donor. 3-amino-2-oxopropyl phosphate is bound by residues G191 and 212–213; that span reads GH.

This sequence belongs to the PNP synthase family. In terms of assembly, homooctamer; tetramer of dimers.

It is found in the cytoplasm. It carries out the reaction 3-amino-2-oxopropyl phosphate + 1-deoxy-D-xylulose 5-phosphate = pyridoxine 5'-phosphate + phosphate + 2 H2O + H(+). The protein operates within cofactor biosynthesis; pyridoxine 5'-phosphate biosynthesis; pyridoxine 5'-phosphate from D-erythrose 4-phosphate: step 5/5. Functionally, catalyzes the complicated ring closure reaction between the two acyclic compounds 1-deoxy-D-xylulose-5-phosphate (DXP) and 3-amino-2-oxopropyl phosphate (1-amino-acetone-3-phosphate or AAP) to form pyridoxine 5'-phosphate (PNP) and inorganic phosphate. This chain is Pyridoxine 5'-phosphate synthase, found in Neisseria meningitidis serogroup B (strain ATCC BAA-335 / MC58).